The sequence spans 604 residues: Glutamine--fructose-6-phosphate aminotransferase [isomerizing] (604 aa).

Residue C2 is the Nucleophile; for GATase activity of the active site. The Glutamine amidotransferase type-2 domain occupies 2–218 (CGIVGVVGNR…DKELVILTKD (217 aa)). SIS domains follow at residues 284 to 423 (IITS…ANGK) and 456 to 594 (VQAL…VDKP). The active-site For Fru-6P isomerization activity is K599.

Homodimer.

The protein resides in the cytoplasm. It catalyses the reaction D-fructose 6-phosphate + L-glutamine = D-glucosamine 6-phosphate + L-glutamate. Functionally, catalyzes the first step in hexosamine metabolism, converting fructose-6P into glucosamine-6P using glutamine as a nitrogen source. The protein is Glutamine--fructose-6-phosphate aminotransferase [isomerizing] of Streptococcus pyogenes serotype M18 (strain MGAS8232).